The chain runs to 454 residues: OTU domain-containing protein 1 (454 aa).

Disordered stretches follow at residues 36–64 and 116–257; these read QSAS…REAA and LPPP…SRAD. Low complexity predominate over residues 52 to 64; it reads RPPAAATEPREAA. Over residues 116–125 the composition is skewed to pro residues; it reads LPPPSAPSPP. Basic and acidic residues-rich tracts occupy residues 151–164, 193–210, and 219–229; these read DAPD…EHRQ, GEER…RASG, and ALRRQDPEAEA. The OTU domain occupies 282 to 411; it reads KYRFHIIPDG…NGHYDAVFDH (130 aa). Residues 287–293 are cys-loop; the sequence is IIPDGNC. The active site involves Asp-290. Cys-293 (nucleophile) is an active-site residue. Positions 342–352 are his-loop; it reads AAQDGAWAGYP. Positions 399 to 404 are variable-loop; it reads WLSNGH. His-404 is an active-site residue. One can recognise a UIM domain in the interval 430 to 449; it reads KRDEELAKSMAISLSKMYIE.

It carries out the reaction Thiol-dependent hydrolysis of ester, thioester, amide, peptide and isopeptide bonds formed by the C-terminal Gly of ubiquitin (a 76-residue protein attached to proteins as an intracellular targeting signal).. Functionally, deubiquitinating enzyme that specifically hydrolyzes 'Lys-63'-linked polyubiquitin to monoubiquitin. Required for the stability and translation of a subset mRNAs with a high abundance of rare codons by mediating deubiquitination of 40S ribosomal protein RPS10/eS10, thereby antagonizing ZNF598-mediated 40S ubiquitination. The abundance of rare codons in mRNAs can limit the translation rate and can lead to ribosome collisions that trigger activation of ribosome quality control (RQC) pathway by ZNF598. OTUD1-mediated deubiquitination prevents activation of the RQC and subsequent dissociation of ribosomes and stimulates formation of polysomes and translation. The protein is OTU domain-containing protein 1 (Otud1) of Mus musculus (Mouse).